We begin with the raw amino-acid sequence, 156 residues long: 6,7-dimethyl-8-ribityllumazine synthase (156 aa).

5-amino-6-(D-ribitylamino)uracil is bound by residues Phe-22, Ala-57 to Glu-59, and Ser-81 to Ile-83. Residue Gly-86–Thr-87 participates in (2S)-2-hydroxy-3-oxobutyl phosphate binding. His-89 acts as the Proton donor in catalysis. 5-amino-6-(D-ribitylamino)uracil is bound at residue Phe-114. Arg-128 is a binding site for (2S)-2-hydroxy-3-oxobutyl phosphate.

Belongs to the DMRL synthase family. As to quaternary structure, forms an icosahedral capsid composed of 60 subunits, arranged as a dodecamer of pentamers.

The enzyme catalyses (2S)-2-hydroxy-3-oxobutyl phosphate + 5-amino-6-(D-ribitylamino)uracil = 6,7-dimethyl-8-(1-D-ribityl)lumazine + phosphate + 2 H2O + H(+). It functions in the pathway cofactor biosynthesis; riboflavin biosynthesis; riboflavin from 2-hydroxy-3-oxobutyl phosphate and 5-amino-6-(D-ribitylamino)uracil: step 1/2. Catalyzes the formation of 6,7-dimethyl-8-ribityllumazine by condensation of 5-amino-6-(D-ribitylamino)uracil with 3,4-dihydroxy-2-butanone 4-phosphate. This is the penultimate step in the biosynthesis of riboflavin. This chain is 6,7-dimethyl-8-ribityllumazine synthase, found in Photobacterium profundum (strain SS9).